The sequence spans 355 residues: UDP-N-acetylglucosamine--N-acetylmuramyl-(pentapeptide) pyrophosphoryl-undecaprenol N-acetylglucosamine transferase (355 aa).

Residues 15 to 17, Asn127, Arg163, Ser191, Ile244, 263 to 268, and Gln288 each bind UDP-N-acetyl-alpha-D-glucosamine; these read TGG and ALTVSE.

The protein belongs to the glycosyltransferase 28 family. MurG subfamily.

It is found in the cell inner membrane. It carries out the reaction di-trans,octa-cis-undecaprenyl diphospho-N-acetyl-alpha-D-muramoyl-L-alanyl-D-glutamyl-meso-2,6-diaminopimeloyl-D-alanyl-D-alanine + UDP-N-acetyl-alpha-D-glucosamine = di-trans,octa-cis-undecaprenyl diphospho-[N-acetyl-alpha-D-glucosaminyl-(1-&gt;4)]-N-acetyl-alpha-D-muramoyl-L-alanyl-D-glutamyl-meso-2,6-diaminopimeloyl-D-alanyl-D-alanine + UDP + H(+). The protein operates within cell wall biogenesis; peptidoglycan biosynthesis. Its function is as follows. Cell wall formation. Catalyzes the transfer of a GlcNAc subunit on undecaprenyl-pyrophosphoryl-MurNAc-pentapeptide (lipid intermediate I) to form undecaprenyl-pyrophosphoryl-MurNAc-(pentapeptide)GlcNAc (lipid intermediate II). This chain is UDP-N-acetylglucosamine--N-acetylmuramyl-(pentapeptide) pyrophosphoryl-undecaprenol N-acetylglucosamine transferase, found in Escherichia coli (strain K12 / MC4100 / BW2952).